Here is a 270-residue protein sequence, read N- to C-terminus: Type III pantothenate kinase (270 aa).

An ATP-binding site is contributed by 16–23 (EIGNTTAM). Substrate contacts are provided by residues Tyr-106 and 113 to 116 (GADR). Asp-115 serves as the catalytic Proton acceptor. Asp-136 is a binding site for K(+). Thr-139 contributes to the ATP binding site. Thr-191 is a binding site for substrate.

This sequence belongs to the type III pantothenate kinase family. Homodimer. Requires NH4(+) as cofactor. It depends on K(+) as a cofactor.

It localises to the cytoplasm. The enzyme catalyses (R)-pantothenate + ATP = (R)-4'-phosphopantothenate + ADP + H(+). It functions in the pathway cofactor biosynthesis; coenzyme A biosynthesis; CoA from (R)-pantothenate: step 1/5. Catalyzes the phosphorylation of pantothenate (Pan), the first step in CoA biosynthesis. The sequence is that of Type III pantothenate kinase from Chlorobium luteolum (strain DSM 273 / BCRC 81028 / 2530) (Pelodictyon luteolum).